The primary structure comprises 118 residues: MASQSQGIQQLLQAEKRAAEKVADARKRKARRLKQAKEEAQMEVEQYRREREHEFQSKQQAAMGSQGNLSAEVEQATRRQVQGMQSSQQRNRERVLAQLLGMVCDVRPQVHPNYRISA.

A disordered region spans residues 25-90 (ARKRKARRLK…VQGMQSSQQR (66 aa)). Residues 35–56 (QAKEEAQMEVEQYRREREHEFQ) show a composition bias toward basic and acidic residues. Composition is skewed to polar residues over residues 57–69 (SKQQAAMGSQGNL) and 78–89 (RRQVQGMQSSQQ).

The protein belongs to the V-ATPase G subunit family. V-ATPase is a heteromultimeric enzyme made up of two complexes: the ATP-hydrolytic V1 complex and the proton translocation V0 complex. The V1 complex consists of three catalytic AB heterodimers that form a heterohexamer, three peripheral stalks each consisting of EG heterodimers, one central rotor including subunits D and F, and the regulatory subunits C and H. The proton translocation complex V0 consists of the proton transport subunit a, a ring of proteolipid subunits c9c'', rotary subunit d, subunits e and f, and the accessory subunits ATP6AP1/Ac45 and ATP6AP2/PRR. In terms of tissue distribution, brain.

It localises to the melanosome. Its subcellular location is the cytoplasmic vesicle. The protein resides in the clathrin-coated vesicle membrane. Functionally, subunit of the V1 complex of vacuolar(H+)-ATPase (V-ATPase), a multisubunit enzyme composed of a peripheral complex (V1) that hydrolyzes ATP and a membrane integral complex (V0) that translocates protons. V-ATPase is responsible for acidifying and maintaining the pH of intracellular compartments and in some cell types, is targeted to the plasma membrane, where it is responsible for acidifying the extracellular environment. The protein is V-type proton ATPase subunit G 2 (ATP6V1G2) of Homo sapiens (Human).